Consider the following 752-residue polypeptide: ATP-dependent RNA helicase DRS1 (752 aa).

Disordered regions lie at residues 1–61 (MVVG…NLDE) and 119–223 (GLVK…TEGD). Positions 19–34 (DSEDDVPILDSSDDEK) are enriched in acidic residues. Basic residues predominate over residues 40-51 (TTKKRKGKNNKK). Basic and acidic residues predominate over residues 124 to 142 (AHIDSKQEEETEKEKVEKE). Acidic residues-rich tracts occupy residues 167–191 (NQSE…QEEM) and 200–209 (DEIDEEDDSE). The residue at position 208 (S208) is a Phosphoserine. Positions 231–259 (ENFNSLSLSRPVLKGLASLGYVKPSPIQS) match the Q motif motif. Residues 262–437 (IPIALLGKDI…SLSLKKPVRI (176 aa)) form the Helicase ATP-binding domain. 275–282 (AVTGSGKT) serves as a coordination point for ATP. The short motif at 385 to 388 (DEAD) is the DEAD box element. Positions 448-639 (KLTQEFVRIR…SMNDTIEDIL (192 aa)) constitute a Helicase C-terminal domain. The stretch at 621–667 (IEETNKLVESMNDTIEDILVEEKEEKEILRAEMQLRKGENMLKHKKE) forms a coiled coil. Positions 673–752 (RRTWFQSESD…NKKKGFKSRR (80 aa)) are disordered. The span at 694–705 (RNKKVTNSKKRK) shows a compositional bias: basic residues. Over residues 722–734 (TKTDRIADQERTF) the composition is skewed to basic and acidic residues. A compositionally biased stretch (basic residues) spans 735-752 (KKQKSTNSNKKKGFKSRR).

Belongs to the DEAD box helicase family. DDX27/DRS1 subfamily. Interacts with RRP1 and associates with pre-ribosomal particles.

It is found in the nucleus. Its subcellular location is the nucleolus. The enzyme catalyses ATP + H2O = ADP + phosphate + H(+). Functionally, ATP-binding RNA helicase involved in ribosome assembly. The chain is ATP-dependent RNA helicase DRS1 (DRS1) from Saccharomyces cerevisiae (strain ATCC 204508 / S288c) (Baker's yeast).